A 105-amino-acid chain; its full sequence is Nitrogen fixation nifHD region GlnB-like protein 1 (105 aa).

It belongs to the P(II) protein family.

In terms of biological role, could be involved in the regulation of nitrogen fixation. The polypeptide is Nitrogen fixation nifHD region GlnB-like protein 1 (glnBA) (Methanothermobacter marburgensis (strain ATCC BAA-927 / DSM 2133 / JCM 14651 / NBRC 100331 / OCM 82 / Marburg) (Methanobacterium thermoautotrophicum)).